A 500-amino-acid chain; its full sequence is Pyridine nucleotide-disulfide oxidoreductase domain-containing protein 1 (500 aa).

Met-1 is subject to N-acetylmethionine.

It belongs to the class-I pyridine nucleotide-disulfide oxidoreductase family. PYROXD1 subfamily. FAD is required as a cofactor.

It localises to the nucleus. Its subcellular location is the cytoplasm. It is found in the myofibril. The protein resides in the sarcomere. Its function is as follows. Probable FAD-dependent oxidoreductase; involved in the cellular oxidative stress response. Required for normal sarcomere structure and muscle fiber integrity. The polypeptide is Pyridine nucleotide-disulfide oxidoreductase domain-containing protein 1 (PYROXD1) (Pongo abelii (Sumatran orangutan)).